Reading from the N-terminus, the 662-residue chain is Biosynthetic arginine decarboxylase (662 aa).

At Lys127 the chain carries N6-(pyridoxal phosphate)lysine. 307–317 (FDVGGGLGVDY) contacts substrate.

This sequence belongs to the Orn/Lys/Arg decarboxylase class-II family. SpeA subfamily. As to quaternary structure, homotetramer. Mg(2+) serves as cofactor. Requires pyridoxal 5'-phosphate as cofactor.

The protein resides in the periplasm. The enzyme catalyses L-arginine + H(+) = agmatine + CO2. Its pathway is amine and polyamine biosynthesis; agmatine biosynthesis; agmatine from L-arginine: step 1/1. In terms of biological role, catalyzes the biosynthesis of agmatine from arginine. The protein is Biosynthetic arginine decarboxylase of Shigella flexneri.